Here is a 198-residue protein sequence, read N- to C-terminus: Superoxide dismutase [Mn], mitochondrial (198 aa).

Position 26 (His-26) interacts with Mn(2+). Residue Tyr-34 is modified to 3'-nitrotyrosine. N6-acetyllysine; alternate is present on residues Lys-44 and Lys-51. N6-succinyllysine; alternate is present on residues Lys-44 and Lys-51. Position 74 (His-74) interacts with Mn(2+). The residue at position 90 (Lys-90) is an N6-acetyllysine. N6-acetyllysine; alternate is present on residues Lys-98 and Lys-106. N6-succinyllysine; alternate occurs at positions 98 and 106. Asp-159 and His-163 together coordinate Mn(2+). Lys-178 is subject to N6-acetyllysine.

This sequence belongs to the iron/manganese superoxide dismutase family. As to quaternary structure, homotetramer. The cofactor is Mn(2+). In terms of processing, nitrated under oxidative stress. Nitration coupled with oxidation inhibits the catalytic activity. Acetylation at Lys-98 decreases enzymatic activity. Deacetylated by SIRT3 upon exposure to ionizing radiations or after long fasting. Post-translationally, polyubiquitinated; leading to proteasomal degradation. Deubiquitinated by USP36 which increases protein stability.

It localises to the mitochondrion matrix. It carries out the reaction 2 superoxide + 2 H(+) = H2O2 + O2. Its function is as follows. Destroys superoxide anion radicals which are normally produced within the cells and which are toxic to biological systems. This Macaca fuscata fuscata (Japanese macaque) protein is Superoxide dismutase [Mn], mitochondrial (SOD2).